The sequence spans 399 residues: Phosphoglycerate kinase (399 aa).

Substrate is bound by residues 24 to 26 (DLN), Arg41, 64 to 67 (HLGR), Arg123, and Arg160. Residues Lys210, Gly298, Glu329, and 355–358 (GGDS) contribute to the ATP site.

It belongs to the phosphoglycerate kinase family. As to quaternary structure, monomer.

It is found in the cytoplasm. The enzyme catalyses (2R)-3-phosphoglycerate + ATP = (2R)-3-phospho-glyceroyl phosphate + ADP. It functions in the pathway carbohydrate degradation; glycolysis; pyruvate from D-glyceraldehyde 3-phosphate: step 2/5. This chain is Phosphoglycerate kinase, found in Salinispora tropica (strain ATCC BAA-916 / DSM 44818 / JCM 13857 / NBRC 105044 / CNB-440).